The primary structure comprises 7705 residues: Copine family protein 2 (7705 aa).

Disordered stretches follow at residues 1-61 (MNDY…RHSE), 269-360 (KEGN…NNSQ), 372-408 (SERKTAKQREQELLQRSERRSGGRTHSHEEYRRHQQP), 464-492 (GDRAHLQYRPRAQKGAAGPTTRGAPTSSV), 506-538 (STEPSPVPSRRALPKSASLSSVQQKQPIKTADG), 560-614 (DERA…QGPP), 1301-1358 (NRSE…DQQV), 4381-4427 (ELEP…RSES), and 6779-6800 (RDEHHEHISETKSYPRDGGKFT). Positions 12–25 (SSQKSNNQKISNNS) are enriched in low complexity. Positions 269 to 282 (KEGNNPSCCRERGT) are enriched in basic and acidic residues. Over residues 302-313 (STSTKVAVTSAS) the composition is skewed to low complexity. Basic residues predominate over residues 318-336 (IKDHKKQLKKEKEKKKKMD). The span at 372-404 (SERKTAKQREQELLQRSERRSGGRTHSHEEYRR) shows a compositional bias: basic and acidic residues. Over residues 522–532 (ASLSSVQQKQP) the composition is skewed to polar residues. Residues 560–587 (DERAKDFLRGDRSSRLSPQSERKNERQI) are compositionally biased toward basic and acidic residues. Over residues 588 to 597 (QIRQQSSGPT) the composition is skewed to polar residues. Basic and acidic residues-rich tracts occupy residues 598–611 (NRRETEIEYEEKRQ) and 1301–1335 (NRSELREMRSEEKRSNSMHHEESHYAHSSYEHTSE). Low complexity predominate over residues 4397 to 4409 (RQSRVYRSSSQVR). Composition is skewed to basic and acidic residues over residues 4411-4427 (PSEESIQKTEALRRSES) and 6779-6797 (RDEHHEHISETKSYPRDGG). In terms of domain architecture, VWFA spans 7475–7673 (NLIFGIDYTK…FHKVMFNAPN (199 aa)).

Belongs to the copine family. Expressed in body wall muscle.

The chain is Copine family protein 2 (cpna-2) from Caenorhabditis elegans.